A 775-amino-acid polypeptide reads, in one-letter code: Phenylalanine--tRNA ligase beta subunit (775 aa).

In terms of domain architecture, tRNA-binding spans 39–147 (GIDLDGVVFG…EDFKPGTDAN (109 aa)). The B5 domain maps to 394 to 470 (YKPKKVFLPQ…RVKGYEHYTS (77 aa)). Residues aspartate 448, aspartate 454, glutamate 457, and glutamate 458 each contribute to the Mg(2+) site. An FDX-ACB domain is found at 681–774 (AKFPPVVRDI…LKEKYGVELR (94 aa)).

The protein belongs to the phenylalanyl-tRNA synthetase beta subunit family. Type 1 subfamily. Tetramer of two alpha and two beta subunits. It depends on Mg(2+) as a cofactor.

The protein localises to the cytoplasm. The enzyme catalyses tRNA(Phe) + L-phenylalanine + ATP = L-phenylalanyl-tRNA(Phe) + AMP + diphosphate + H(+). This Aquifex aeolicus (strain VF5) protein is Phenylalanine--tRNA ligase beta subunit (pheT).